We begin with the raw amino-acid sequence, 219 residues long: MALPRPLLLELLLYGSCFICGIITAASVTISQGSFDGKCMLYGSVRLNSSTIDVLSFSSLSLCYFVSAISVCVAVFCFSLTLYWIYIAFVDGEIKREKLWMNVTLGLSGVFLFFLLVTGCILKIGRDRLCDSLLHTVSNITRCEEAQNKSWRSPINASQFYTRLHSAETAVWVNFFFWMIIVVLVLIQRHKGSEIRPGTEDPSAPPSETEPFFNRPGRP.

The next 4 membrane-spanning stretches (helical) occupy residues 6-26 (PLLL…ITAA), 69-89 (ISVC…YIAF), 105-125 (LGLS…LKIG), and 167-187 (AETA…LVLI). The disordered stretch occupies residues 195-219 (IRPGTEDPSAPPSETEPFFNRPGRP).

This sequence belongs to the TMEM179 family.

It localises to the membrane. The polypeptide is Transmembrane protein 179B (tmem179b) (Danio rerio (Zebrafish)).